A 206-amino-acid chain; its full sequence is Protein tyrosine phosphatase receptor type C-associated protein (206 aa).

A helical transmembrane segment spans residues 34–54 (VTVVLLLLLLLLLATGLALAW). The tract at residues 98 to 173 (GSTDNDLERQ…PGPASAGGSA (76 aa)) is disordered. A phosphoserine mark is found at serine 99 and serine 153. Over residues 161-173 (LGSPGPASAGGSA) the composition is skewed to low complexity.

In terms of assembly, interacts with CD45/PTPRC. In terms of processing, phosphorylated on tyrosine residues.

The protein resides in the membrane. This Homo sapiens (Human) protein is Protein tyrosine phosphatase receptor type C-associated protein (PTPRCAP).